Reading from the N-terminus, the 353-residue chain is UPF0283 membrane protein Spro_2618 (353 aa).

3 helical membrane-spanning segments follow: residues 71–91 (MVTA…VQWV), 101–121 (IAMG…GSVV), and 214–234 (ESTL…FIAW).

This sequence belongs to the UPF0283 family.

Its subcellular location is the cell inner membrane. The polypeptide is UPF0283 membrane protein Spro_2618 (Serratia proteamaculans (strain 568)).